An 827-amino-acid polypeptide reads, in one-letter code: uncharacterized protein (827 aa).

In terms of domain architecture, PAS 1 spans 12–82 (FDADFEAILN…DMDIGVLSTG (71 aa)). Positions 212–264 (LDVEFRLAAAEGGYSWYRSRAATRRAEDGSILRWYGTVEDIDDRRKMFEALKE) constitute a PAC 1 domain. In terms of domain architecture, PAS 2 spans 265–335 (SEARFRAIAD…RVFYQAFDLR (71 aa)). In terms of domain architecture, PAC 2 spans 338 to 390 (VRMEYRLKRAGGGSAWVIDIGQPRFASDGTFLGFVGIALDITERRNAEQERLL). The GGDEF domain occupies 428-561 (TRLAILCLDL…GGGTIVQYEP (134 aa)). An EAL domain is found at 570–820 (RQRMKVSLRH…QAMALLKSRS (251 aa)).

This is an uncharacterized protein from Sinorhizobium fredii (strain NBRC 101917 / NGR234).